The chain runs to 217 residues: Ribulose-phosphate 3-epimerase (217 aa).

Serine 6 is a substrate binding site. Positions 29, 31, and 62 each coordinate a divalent metal cation. Aspartate 31 functions as the Proton acceptor in the catalytic mechanism. Residues histidine 62, 138–141, 171–173, and 193–194 each bind substrate; these read GFGG, DGG, and GS. Aspartate 171 lines the a divalent metal cation pocket. Aspartate 171 serves as the catalytic Proton donor.

The protein belongs to the ribulose-phosphate 3-epimerase family. The cofactor is a divalent metal cation.

The catalysed reaction is D-ribulose 5-phosphate = D-xylulose 5-phosphate. The protein operates within carbohydrate degradation. In terms of biological role, catalyzes the reversible epimerization of D-ribulose 5-phosphate to D-xylulose 5-phosphate. This Helicobacter pylori (strain ATCC 700392 / 26695) (Campylobacter pylori) protein is Ribulose-phosphate 3-epimerase.